Reading from the N-terminus, the 388-residue chain is Muscleblind-like protein 1 (388 aa).

Phosphothreonine is present on Thr-6. 4 C3H1-type zinc fingers span residues 13–41 (WLTLEVCREFQRGTCSRPDTECKFAHPSK), 47–73 (NGRVIACFDSLKGRCSRENCKYLHPPP), 179–207 (TDRLEVCREYQRGNCNRGENDCRFAHPAD), and 215–241 (DNTVTVCMDYIKGRCSREKCKYFHPPA).

It belongs to the muscleblind family. As to quaternary structure, interacts with DDX1 and YBX1. Interacts with HNRNPH1; the interaction in RNA-independent. Interacts with RBPMS; the interaction allows cooperative assembly of RNA-bound stable cell-specific alternative splicing regulatory complexes. As to expression, highly expressed in cardiac, skeletal muscle and during myoblast differentiation. Weakly expressed in other tissues (at protein level). Expressed in heart, brain, placenta, lung, liver, skeletal muscle, kidney and pancreas.

The protein resides in the nucleus. The protein localises to the cytoplasm. It is found in the cytoplasmic granule. Its function is as follows. Mediates pre-mRNA alternative splicing regulation. Acts either as activator or repressor of splicing on specific pre-mRNA targets. Inhibits cardiac troponin-T (TNNT2) pre-mRNA exon inclusion but induces insulin receptor (IR) pre-mRNA exon inclusion in muscle. Antagonizes the alternative splicing activity pattern of CELF proteins. Regulates the TNNT2 exon 5 skipping through competition with U2AF2. Inhibits the formation of the spliceosome A complex on intron 4 of TNNT2 pre-mRNA. Binds to the stem-loop structure within the polypyrimidine tract of TNNT2 intron 4 during spliceosome assembly. Binds to the 5'-YGCU(U/G)Y-3'consensus sequence. Binds to the IR RNA. Binds to expanded CUG repeat RNA, which folds into a hairpin structure containing GC base pairs and bulged, unpaired U residues. Together with RNA binding proteins RBPMS and RBFOX2, activates vascular smooth muscle cells alternative splicing events. Regulates NCOR2 alternative splicing. The protein is Muscleblind-like protein 1 (MBNL1) of Homo sapiens (Human).